Here is a 427-residue protein sequence, read N- to C-terminus: Acetyl-CoA acetyltransferase, mitochondrial (427 aa).

The N-terminal 33 residues, 1 to 33, are a transit peptide targeting the mitochondrion; that stretch reads MAVLAALLRGGARSRSPLLRRLVQEIRYVERSY. Position 66 is an N6-acetyllysine; alternate (K66). At K66 the chain carries N6-succinyllysine; alternate. K78 is subject to N6-succinyllysine. C126 acts as the Acyl-thioester intermediate in catalysis. An N6-acetyllysine; alternate mark is found at K174, K181, K190, and K202. K174, K181, K190, and K202 each carry N6-succinyllysine; alternate. Residue Y219 participates in CoA binding. Y219 lines the K(+) pocket. 2 positions are modified to N6-acetyllysine; alternate: K223 and K230. An N6-succinyllysine; alternate mark is found at K223 and K230. K243 bears the N6-succinyllysine mark. 2 positions are modified to N6-acetyllysine: K251 and K257. CoA-binding positions include 258 to 260 and K263; that span reads RVD. K263 bears the N6-acetyllysine; alternate mark. K263 is modified (N6-succinyllysine; alternate). 2 positions are modified to N6-succinyllysine: K266 and K268. K273 is subject to N6-acetyllysine. The K(+) site is built by A280, A281, and A283. CoA is bound at residue S284. The residue at position 338 (K338) is an N6-acetyllysine. V381 contacts K(+). C413 (proton donor/acceptor) is an active-site residue.

This sequence belongs to the thiolase-like superfamily. Thiolase family. Homotetramer. Succinylation at Lys-268, adjacent to a coenzyme A binding site. Desuccinylated by SIRT5.

The protein localises to the mitochondrion. It carries out the reaction 2 acetyl-CoA = acetoacetyl-CoA + CoA. The catalysed reaction is propanoyl-CoA + acetyl-CoA = 2-methyl-3-oxobutanoyl-CoA + CoA. The protein operates within lipid metabolism; fatty acid beta-oxidation. Its activity is regulated as follows. Activated by potassium ions, but not sodium ions. This is one of the enzymes that catalyzes the last step of the mitochondrial beta-oxidation pathway, an aerobic process breaking down fatty acids into acetyl-CoA. Using free coenzyme A/CoA, catalyzes the thiolytic cleavage of medium- to long-chain 3-oxoacyl-CoAs into acetyl-CoA and a fatty acyl-CoA shortened by two carbon atoms. The activity of the enzyme is reversible and it can also catalyze the condensation of two acetyl-CoA molecules into acetoacetyl-CoA. Thereby, it plays a major role in ketone body metabolism. The protein is Acetyl-CoA acetyltransferase, mitochondrial (ACAT1) of Macaca fascicularis (Crab-eating macaque).